The chain runs to 164 residues: ATP synthase subunit b (164 aa).

The helical transmembrane segment at 4-24 (LGINPTLFIAQLINFLLLIFI) threads the bilayer.

This sequence belongs to the ATPase B chain family. In terms of assembly, F-type ATPases have 2 components, F(1) - the catalytic core - and F(0) - the membrane proton channel. F(1) has five subunits: alpha(3), beta(3), gamma(1), delta(1), epsilon(1). F(0) has four main subunits: a(1), b(2) and c(10-14). The alpha and beta chains form an alternating ring which encloses part of the gamma chain. F(1) is attached to F(0) by a central stalk formed by the gamma and epsilon chains, while a peripheral stalk is formed by the delta and b chains.

Its subcellular location is the cell membrane. Functionally, f(1)F(0) ATP synthase produces ATP from ADP in the presence of a proton or sodium gradient. F-type ATPases consist of two structural domains, F(1) containing the extramembraneous catalytic core and F(0) containing the membrane proton channel, linked together by a central stalk and a peripheral stalk. During catalysis, ATP synthesis in the catalytic domain of F(1) is coupled via a rotary mechanism of the central stalk subunits to proton translocation. In terms of biological role, component of the F(0) channel, it forms part of the peripheral stalk, linking F(1) to F(0). In Chloroflexus aurantiacus (strain ATCC 29366 / DSM 635 / J-10-fl), this protein is ATP synthase subunit b.